The sequence spans 266 residues: MEGSPAGPIEQKEARWESSWEEQPDWTLGCLSPESQFRIPGLPGCILSFQLKVCFLPVMWLFILLSLALISDAMVMDEKVKRSFVLDTASAICNYNAHYKNHPKYWCRGYFRDYCNIIAFSPNSTNHVALRDTGNQLIVTMSCLTKEDTGWYWCGIQRDFARDDMDFTELIVTDDKGTLANDFWSGKDLSGNKTRSCKAPKVVRKADRSRTSILIICILITGLGIISVISHLTKRRRSQRNRRVGNTLKPFSRVLTPKEMAPTEQM.

Residues 1–20 form a disordered region; sequence MEGSPAGPIEQKEARWESSW. A helical transmembrane segment spans residues 55–75; the sequence is FLPVMWLFILLSLALISDAMV. N192 is a glycosylation site (N-linked (GlcNAc...) asparagine). A helical membrane pass occupies residues 213–233; it reads ILIICILITGLGIISVISHLT.

Expressed in the lung and bone. Expressed at lower levels in osteosarcoma tissues (at protein level).

The protein localises to the membrane. Its function is as follows. Plays a suppressive role in osteosarcoma malignancy by inhibiting NF-kappa-B activity. This Homo sapiens (Human) protein is Transmembrane domain-containing protein TMIGD3.